The primary structure comprises 158 residues: Anti-tumor lectin (158 aa).

Glutamine 1 carries the blocked amino end (Gln) modification. Residues 12-155 (TSVDLAAPVT…STVVEAVTYT (144 aa)) form the Galectin domain. Asparagine 43, histidine 59, arginine 63, asparagine 72, arginine 74, tryptophan 80, and glutamate 83 together coordinate N-acetyl-alpha-neuraminyl-(2-&gt;3)-beta-D-galactosyl-(1-&gt;4)-beta-D-glucose.

As to quaternary structure, homodimer. As to expression, detected in the fruiting body.

Anti-tumor lectin with DNase activity. Inhibits the growth of several tumor cell lines in vitro. Induces lymphocyte infiltration and necrosis of tumor cells in a mouse tumor model. Induces apoptosis in HeLa cells. Binds N-acetylneuraminyl lactose (N-acetyl-alpha-neuraminyl-(2-&gt;3)-beta-D-galactosyl-(1-&gt;4)-beta-D-glucose). The protein is Anti-tumor lectin of Cyclocybe aegerita (Black poplar mushroom).